The sequence spans 160 residues: Oocyte-secreted protein 4B (160 aa).

Positions 1–13 (MKTSVLLAITAMC) are cleaved as a signal peptide.

It belongs to the PLAC1 family.

Its subcellular location is the secreted. In Homo sapiens (Human), this protein is Oocyte-secreted protein 4B.